The sequence spans 240 residues: Molybdate/tungstate import ATP-binding protein WtpC (240 aa).

The 226-residue stretch at Phe2–Ser227 folds into the ABC transporter domain. ATP is bound at residue Gly31–Ser38.

The protein belongs to the ABC transporter superfamily. Sulfate/tungstate importer (TC 3.A.1.6) family. The complex is composed of two ATP-binding proteins (WtpC), two transmembrane proteins (WtpB) and a solute-binding protein (WtpA).

Its subcellular location is the cell membrane. It catalyses the reaction tungstate(in) + ATP + H2O = tungstate(out) + ADP + phosphate + H(+). Part of the ABC transporter complex WtpABC involved in molybdate/tungstate import. Responsible for energy coupling to the transport system. The protein is Molybdate/tungstate import ATP-binding protein WtpC (wtpC) of Archaeoglobus fulgidus (strain ATCC 49558 / DSM 4304 / JCM 9628 / NBRC 100126 / VC-16).